Reading from the N-terminus, the 180-residue chain is Acireductone dioxygenase (180 aa).

Fe(2+) is bound by residues His-97, His-99, Glu-103, and His-141. Ni(2+) contacts are provided by His-97, His-99, Glu-103, and His-141.

It belongs to the acireductone dioxygenase (ARD) family. In terms of assembly, monomer. The cofactor is Fe(2+). Requires Ni(2+) as cofactor.

The enzyme catalyses 1,2-dihydroxy-5-(methylsulfanyl)pent-1-en-3-one + O2 = 3-(methylsulfanyl)propanoate + CO + formate + 2 H(+). It catalyses the reaction 1,2-dihydroxy-5-(methylsulfanyl)pent-1-en-3-one + O2 = 4-methylsulfanyl-2-oxobutanoate + formate + 2 H(+). Its pathway is amino-acid biosynthesis; L-methionine biosynthesis via salvage pathway; L-methionine from S-methyl-5-thio-alpha-D-ribose 1-phosphate: step 5/6. Catalyzes 2 different reactions between oxygen and the acireductone 1,2-dihydroxy-3-keto-5-methylthiopentene (DHK-MTPene) depending upon the metal bound in the active site. Fe-containing acireductone dioxygenase (Fe-ARD) produces formate and 2-keto-4-methylthiobutyrate (KMTB), the alpha-ketoacid precursor of methionine in the methionine recycle pathway. Ni-containing acireductone dioxygenase (Ni-ARD) produces methylthiopropionate, carbon monoxide and formate, and does not lie on the methionine recycle pathway. This Acidiphilium cryptum (strain JF-5) protein is Acireductone dioxygenase.